The chain runs to 332 residues: D-alanine--D-alanine ligase (332 aa).

Over residues 1–17 (MPMTMTQSATNPTATPV) the composition is skewed to polar residues. The tract at residues 1-28 (MPMTMTQSATNPTATPVSANKASANAAT) is disordered. The span at 18–28 (SANKASANAAT) shows a compositional bias: low complexity. In terms of domain architecture, ATP-grasp spans 132 to 329 (KQLWHGCGLS…FEQLCWHILA (198 aa)). Position 158 to 213 (158 to 213 (VNTLGLPLIVKPVHEGSSIGMSKVNTLDELPKAYEVAAGCGDVVMAEKWITGREFT)) interacts with ATP. 3 residues coordinate Mg(2+): Asp283, Glu296, and Asn298.

It belongs to the D-alanine--D-alanine ligase family. Requires Mg(2+) as cofactor. Mn(2+) serves as cofactor.

It localises to the cytoplasm. It carries out the reaction 2 D-alanine + ATP = D-alanyl-D-alanine + ADP + phosphate + H(+). It functions in the pathway cell wall biogenesis; peptidoglycan biosynthesis. Cell wall formation. This Psychrobacter sp. (strain PRwf-1) protein is D-alanine--D-alanine ligase.